The following is a 767-amino-acid chain: Ribonucleoside-diphosphate reductase large subunit (767 aa).

Substrate is bound by residues Thr176, 191 to 192 (SC), Gly222, 392 to 396 (NLCAE), and 578 to 582 (PTAGT). Cys192 and Cys408 are disulfide-bonded. The active-site Proton acceptor is the Asn392. Cys394 functions as the Cysteine radical intermediate in the catalytic mechanism. Glu396 serves as the catalytic Proton acceptor.

The protein belongs to the ribonucleoside diphosphate reductase large chain family. Heterotetramer composed of a homodimer of the large subunit (R1) and a homodimer of the small subunit (R2). Larger multisubunit protein complex are also active, composed of (R1)n(R2)n.

The enzyme catalyses a 2'-deoxyribonucleoside 5'-diphosphate + [thioredoxin]-disulfide + H2O = a ribonucleoside 5'-diphosphate + [thioredoxin]-dithiol. Ribonucleoside-diphosphate reductase holoenzyme provides the precursors necessary for viral DNA synthesis. Allows virus growth in non-dividing cells, as well as reactivation from latency in infected hosts. Catalyzes the biosynthesis of deoxyribonucleotides from the corresponding ribonucleotides. The sequence is that of Ribonucleoside-diphosphate reductase large subunit from Saimiri sciureus (Common squirrel monkey).